The primary structure comprises 660 residues: Bifunctional polymyxin resistance protein ArnA (660 aa).

The tract at residues 1–304 (MKAVIFAYHD…TLGLVAGARL (304 aa)) is formyltransferase ArnAFT. Catalysis depends on H104, which acts as the Proton donor; for formyltransferase activity. Residues R114 and 136-140 (VKRAD) contribute to the (6R)-10-formyltetrahydrofolate site. The interval 314–660 (RRIRVLILGV…RSVDVAERAS (347 aa)) is dehydrogenase ArnADH. NAD(+) contacts are provided by residues D347 and 368-369 (DI). Residues A393, Y398, and 432–433 (TS) contribute to the UDP-alpha-D-glucuronate site. Catalysis depends on E434, which acts as the Proton acceptor; for decarboxylase activity. Residues R460, N492, 526 to 535 (KLIDGGQQKR), and Y613 contribute to the UDP-alpha-D-glucuronate site. R619 acts as the Proton donor; for decarboxylase activity in catalysis.

The protein in the N-terminal section; belongs to the Fmt family. UDP-L-Ara4N formyltransferase subfamily. It in the C-terminal section; belongs to the NAD(P)-dependent epimerase/dehydratase family. UDP-glucuronic acid decarboxylase subfamily. As to quaternary structure, homohexamer, formed by a dimer of trimers.

It catalyses the reaction UDP-alpha-D-glucuronate + NAD(+) = UDP-beta-L-threo-pentopyranos-4-ulose + CO2 + NADH. The catalysed reaction is UDP-4-amino-4-deoxy-beta-L-arabinose + (6R)-10-formyltetrahydrofolate = UDP-4-deoxy-4-formamido-beta-L-arabinose + (6S)-5,6,7,8-tetrahydrofolate + H(+). Its pathway is nucleotide-sugar biosynthesis; UDP-4-deoxy-4-formamido-beta-L-arabinose biosynthesis; UDP-4-deoxy-4-formamido-beta-L-arabinose from UDP-alpha-D-glucuronate: step 1/3. The protein operates within nucleotide-sugar biosynthesis; UDP-4-deoxy-4-formamido-beta-L-arabinose biosynthesis; UDP-4-deoxy-4-formamido-beta-L-arabinose from UDP-alpha-D-glucuronate: step 3/3. It functions in the pathway bacterial outer membrane biogenesis; lipopolysaccharide biosynthesis. In terms of biological role, bifunctional enzyme that catalyzes the oxidative decarboxylation of UDP-glucuronic acid (UDP-GlcUA) to UDP-4-keto-arabinose (UDP-Ara4O) and the addition of a formyl group to UDP-4-amino-4-deoxy-L-arabinose (UDP-L-Ara4N) to form UDP-L-4-formamido-arabinose (UDP-L-Ara4FN). The modified arabinose is attached to lipid A and is required for resistance to polymyxin and cationic antimicrobial peptides. The sequence is that of Bifunctional polymyxin resistance protein ArnA from Salmonella choleraesuis (strain SC-B67).